The sequence spans 121 residues: Small ribosomal subunit protein bS6 (121 aa).

Residues Asp96–Ala121 form a disordered region. Over residues Thr105–Gln115 the composition is skewed to basic and acidic residues.

It belongs to the bacterial ribosomal protein bS6 family.

Binds together with bS18 to 16S ribosomal RNA. The chain is Small ribosomal subunit protein bS6 from Albidiferax ferrireducens (strain ATCC BAA-621 / DSM 15236 / T118) (Rhodoferax ferrireducens).